A 359-amino-acid chain; its full sequence is tRNA-specific 2-thiouridylase MnmA (359 aa).

Residues 9–16 and M35 contribute to the ATP site; that span reads GISGGVDS. The interval 95–97 is interaction with target base in tRNA; sequence NPD. Residue C100 is the Nucleophile of the active site. C100 and C197 form a disulfide bridge. G124 is a binding site for ATP. Positions 147–149 are interaction with tRNA; sequence KDQ. The active-site Cysteine persulfide intermediate is the C197. The interaction with tRNA stretch occupies residues 309–310; the sequence is RY.

Belongs to the MnmA/TRMU family.

It localises to the cytoplasm. The catalysed reaction is S-sulfanyl-L-cysteinyl-[protein] + uridine(34) in tRNA + AH2 + ATP = 2-thiouridine(34) in tRNA + L-cysteinyl-[protein] + A + AMP + diphosphate + H(+). Catalyzes the 2-thiolation of uridine at the wobble position (U34) of tRNA, leading to the formation of s(2)U34. In Francisella tularensis subsp. holarctica (strain FTNF002-00 / FTA), this protein is tRNA-specific 2-thiouridylase MnmA.